The following is a 526-amino-acid chain: Amino acid transporter heavy chain SLC3A2 (526 aa).

Positions 1 to 31 (MSQDTEVDMKDVELNELEPEKQPMNAADGAA) are disordered. The Cytoplasmic portion of the chain corresponds to 1–75 (MSQDTEVDMK…AGSPGWVRTR (75 aa)). Ser2 carries the phosphoserine modification. Position 5 is a phosphothreonine (Thr5). The span at 7–21 (VDMKDVELNELEPEK) shows a compositional bias: basic and acidic residues. A Glycyl lysine isopeptide (Lys-Gly) (interchain with G-Cter in ubiquitin) cross-link involves residue Lys42. The residue at position 58 (Ser58) is a Phosphoserine. A Glycyl lysine isopeptide (Lys-Gly) (interchain with G-Cter in SUMO2) cross-link involves residue Lys59. A helical; Signal-anchor for type II membrane protein membrane pass occupies residues 76–99 (WALLLLFWLGWLGMLAGAVVIIVR). Over 100-526 (APRCRELPVQ…GLLLQFPFVA (427 aa)) the chain is Extracellular. 3 N-linked (GlcNAc...) asparagine glycosylation sites follow: Asn166, Asn259, and Asn263. Ser300 is modified (phosphoserine). Asn301 is a glycosylation site (N-linked (GlcNAc...) asparagine). Residue Ser302 is modified to Phosphoserine. 3 N-linked (GlcNAc...) asparagine glycosylation sites follow: Asn318, Asn385, and Asn399. Ser420 carries the phosphoserine modification. Asn509 is a glycosylation site (N-linked (GlcNAc...) asparagine).

The protein belongs to the SLC3A transporter family. Disulfide-linked heterodimer with a non-glycosylated light chain (SLC7A5, SLC7A6, SLC7A7, SLC7A8, SLC7A10 or SLC7A11). Interacts with TLCD3A/CT120 and ICAM1. Constitutively and specifically associates with beta-1 integrins (alpha-2/beta-1, alpha-3/beta-1, alpha-5/beta-1 and alpha-6/beta-1), but minimally with alpha-4/beta-1. Interacts with LAPTM4B; recruits SLC3A2 and SLC7A5 to lysosomes to promote leucine uptake into these organelles and is required for mTORC1 activation. In terms of processing, phosphorylation on Ser-300 or Ser-302 and on Ser-420 by ecto-protein kinases favors heterotypic cell-cell interactions. Post-translationally, N-glycosylated; N-glycosylation is crucial for trafficking and stability of SLC3A2 to the plasma membrane. In terms of tissue distribution, detected on the surface of embryonic epithelial cells in the epidermis, thymus, kidney, intestine, brain choroid plexus, and in retina. Detected in adult and embryonic brain, spleen, kidney, intestine and liver, and in adult testis (at protein level). Observed in all adult tissues tested with strongest expression in kidney, small intestine, spleen, thymus and liver. Moderate expression in brain, stomach, heart, testis, lung, skin, pancreas and skeletal muscle. In brain expressed on capillary endothelia in cerebral cortex.

The protein localises to the apical cell membrane. Its subcellular location is the cell membrane. It localises to the cell junction. It is found in the lysosome membrane. The protein resides in the melanosome. The protein localises to the basolateral cell membrane. Its function is as follows. Acts as a chaperone that facilitates biogenesis and trafficking of functional transporters heterodimers to the plasma membrane. Forms heterodimer with SLC7 family transporters (SLC7A5, SLC7A6, SLC7A7, SLC7A8, SLC7A10 and SLC7A11), a group of amino-acid antiporters. Heterodimers function as amino acids exchangers, the specificity of the substrate depending on the SLC7A subunit. Heterodimers SLC3A2/SLC7A6 or SLC3A2/SLC7A7 mediate the uptake of dibasic amino acids. Heterodimer SLC3A2/SLC7A11 functions as an antiporter by mediating the exchange of extracellular anionic L-cystine and intracellular L-glutamate across the cellular plasma membrane. SLC3A2/SLC7A10 translocates small neutral L- and D-amino acids across the plasma membrane. SLC3A2/SLC75 or SLC3A2/SLC7A8 translocates neutral amino acids with broad specificity, thyroid hormones and L-DOPA. SLC3A2 is essential for plasma membrane localization, stability, and the transport activity of SLC7A5 and SLC7A8. When associated with LAPTM4B, the heterodimer SLC7A5 is recruited to lysosomes to promote leucine uptake into these organelles, and thereby mediates mTORC1 activation. Modulates integrin-related signaling and is essential for integrin-dependent cell spreading, migration and tumor progression. The chain is Amino acid transporter heavy chain SLC3A2 from Mus musculus (Mouse).